Consider the following 248-residue polypeptide: MFRDGSLIPYLTAGDPSAKATLRFLLAIEEYSGAIELGIPFSDPIADGKTIQQSHFRALKGGFKLEHAFNIVREFRKHSDVPIVLMTYYNPVFRVGLREFIGKAKDSGVDGMLIVDLPVMHASEFLEVAREEGIKTVFLAAPNTPDERLKEIDKASTGFVYLISLYGTTGARDKIPETAFNLLKRAKRICKNKVAVGFGVSKREHVEMLLNAGANGVVVGSALINIIAEHGENAEEKLREKVRELAGL.

Catalysis depends on proton acceptor residues glutamate 36 and aspartate 47.

This sequence belongs to the TrpA family. In terms of assembly, tetramer of two alpha and two beta chains.

The enzyme catalyses (1S,2R)-1-C-(indol-3-yl)glycerol 3-phosphate + L-serine = D-glyceraldehyde 3-phosphate + L-tryptophan + H2O. The protein operates within amino-acid biosynthesis; L-tryptophan biosynthesis; L-tryptophan from chorismate: step 5/5. Functionally, the alpha subunit is responsible for the aldol cleavage of indoleglycerol phosphate to indole and glyceraldehyde 3-phosphate. In Pyrococcus abyssi (strain GE5 / Orsay), this protein is Tryptophan synthase alpha chain.